Consider the following 264-residue polypeptide: Acyl-[acyl-carrier-protein]--UDP-N-acetylglucosamine O-acyltransferase (264 aa).

Belongs to the transferase hexapeptide repeat family. LpxA subfamily. As to quaternary structure, homotrimer.

It localises to the cytoplasm. It catalyses the reaction a (3R)-hydroxyacyl-[ACP] + UDP-N-acetyl-alpha-D-glucosamine = a UDP-3-O-[(3R)-3-hydroxyacyl]-N-acetyl-alpha-D-glucosamine + holo-[ACP]. The protein operates within glycolipid biosynthesis; lipid IV(A) biosynthesis; lipid IV(A) from (3R)-3-hydroxytetradecanoyl-[acyl-carrier-protein] and UDP-N-acetyl-alpha-D-glucosamine: step 1/6. In terms of biological role, involved in the biosynthesis of lipid A, a phosphorylated glycolipid that anchors the lipopolysaccharide to the outer membrane of the cell. This chain is Acyl-[acyl-carrier-protein]--UDP-N-acetylglucosamine O-acyltransferase, found in Actinobacillus pleuropneumoniae serotype 7 (strain AP76).